A 973-amino-acid chain; its full sequence is Isoleucine--tRNA ligase, mitochondrial (973 aa).

A 'HIGH' region motif is present at residues P87–H97. Positions K625–S629 match the 'KMSKS' region motif. K628 is an ATP binding site.

Belongs to the class-I aminoacyl-tRNA synthetase family.

The protein resides in the cytoplasm. Its subcellular location is the mitochondrion matrix. It carries out the reaction tRNA(Ile) + L-isoleucine + ATP = L-isoleucyl-tRNA(Ile) + AMP + diphosphate. This Schizosaccharomyces pombe (strain 972 / ATCC 24843) (Fission yeast) protein is Isoleucine--tRNA ligase, mitochondrial (ism1).